A 118-amino-acid polypeptide reads, in one-letter code: Large ribosomal subunit protein bL20 (118 aa).

It belongs to the bacterial ribosomal protein bL20 family.

Binds directly to 23S ribosomal RNA and is necessary for the in vitro assembly process of the 50S ribosomal subunit. It is not involved in the protein synthesizing functions of that subunit. This chain is Large ribosomal subunit protein bL20, found in Photorhabdus laumondii subsp. laumondii (strain DSM 15139 / CIP 105565 / TT01) (Photorhabdus luminescens subsp. laumondii).